We begin with the raw amino-acid sequence, 377 residues long: Delta(12) fatty acid desaturase DES8.11 (377 aa).

Helical transmembrane passes span 55-75 (LIVA…IPTP) and 79-99 (LAWP…WVIG). Positions 100–104 (HECGH) match the Histidine box-1 motif. The helical transmembrane segment at 112 to 132 (LIDDIVGFVLHSALLTPYFSW) threads the bilayer. Residues 136-140 (HRNHH) carry the Histidine box-2 motif. The next 3 membrane-spanning stretches (helical) occupy residues 174–194 (VFTL…TNIS), 220–240 (VLLS…LVAA), and 244–264 (AWVI…FVLI). A Histidine box-3 motif is present at residues 310 to 314 (HVLHH).

Belongs to the fatty acid desaturase type 1 family.

Its subcellular location is the membrane. It functions in the pathway lipid metabolism; polyunsaturated fatty acid biosynthesis. In terms of biological role, converts linoleic acid into a conjugated octadecatrienoic acid, probably calendic acid. The sequence is that of Delta(12) fatty acid desaturase DES8.11 from Calendula officinalis (Pot marigold).